We begin with the raw amino-acid sequence, 232 residues long: Probable proteasome subunit alpha type-3 (232 aa).

The protein belongs to the peptidase T1A family. In terms of assembly, the 26S proteasome consists of a 20S proteasome core and two 19S regulatory subunits. The 20S proteasome core is composed of 28 subunits that are arranged in four stacked rings, resulting in a barrel-shaped structure. The two end rings are each formed by seven alpha subunits, and the two central rings are each formed by seven beta subunits. The catalytic chamber with the active sites is on the inside of the barrel.

The protein resides in the cytoplasm. It is found in the nucleus. In terms of biological role, the proteasome degrades poly-ubiquitinated proteins in the cytoplasm and in the nucleus. It is essential for the regulated turnover of proteins and for the removal of misfolded proteins. The proteasome is a multicatalytic proteinase complex that is characterized by its ability to cleave peptides with Arg, Phe, Tyr, Leu, and Glu adjacent to the leaving group at neutral or slightly basic pH. It has an ATP-dependent proteolytic activity. The sequence is that of Probable proteasome subunit alpha type-3 (PRE9) from Encephalitozoon cuniculi (strain GB-M1) (Microsporidian parasite).